A 339-amino-acid polypeptide reads, in one-letter code: Phosphoribosylformylglycinamidine cyclo-ligase (339 aa).

The protein belongs to the AIR synthase family.

It is found in the cytoplasm. It catalyses the reaction 2-formamido-N(1)-(5-O-phospho-beta-D-ribosyl)acetamidine + ATP = 5-amino-1-(5-phospho-beta-D-ribosyl)imidazole + ADP + phosphate + H(+). The protein operates within purine metabolism; IMP biosynthesis via de novo pathway; 5-amino-1-(5-phospho-D-ribosyl)imidazole from N(2)-formyl-N(1)-(5-phospho-D-ribosyl)glycinamide: step 2/2. The sequence is that of Phosphoribosylformylglycinamidine cyclo-ligase from Desulfitobacterium hafniense (strain DSM 10664 / DCB-2).